A 105-amino-acid polypeptide reads, in one-letter code: Urease subunit beta (105 aa).

Belongs to the urease beta subunit family. Heterotrimer of UreA (gamma), UreB (beta) and UreC (alpha) subunits. Three heterotrimers associate to form the active enzyme.

The protein resides in the cytoplasm. It carries out the reaction urea + 2 H2O + H(+) = hydrogencarbonate + 2 NH4(+). It participates in nitrogen metabolism; urea degradation; CO(2) and NH(3) from urea (urease route): step 1/1. This Pseudomonas entomophila (strain L48) protein is Urease subunit beta.